A 483-amino-acid chain; its full sequence is Regulatory protein ViaA (483 aa).

This sequence belongs to the ViaA family. In terms of assembly, homodimer. Interacts with RavA.

Its subcellular location is the cytoplasm. Functionally, component of the RavA-ViaA chaperone complex, which may act on the membrane to optimize the function of some of the respiratory chains. ViaA stimulates the ATPase activity of RavA. The sequence is that of Regulatory protein ViaA from Escherichia coli O81 (strain ED1a).